The following is a 223-amino-acid chain: 2-C-methyl-D-erythritol 4-phosphate cytidylyltransferase (223 aa).

It belongs to the IspD/TarI cytidylyltransferase family. IspD subfamily.

The catalysed reaction is 2-C-methyl-D-erythritol 4-phosphate + CTP + H(+) = 4-CDP-2-C-methyl-D-erythritol + diphosphate. It functions in the pathway isoprenoid biosynthesis; isopentenyl diphosphate biosynthesis via DXP pathway; isopentenyl diphosphate from 1-deoxy-D-xylulose 5-phosphate: step 2/6. Its function is as follows. Catalyzes the formation of 4-diphosphocytidyl-2-C-methyl-D-erythritol from CTP and 2-C-methyl-D-erythritol 4-phosphate (MEP). In Prochlorococcus marinus (strain MIT 9515), this protein is 2-C-methyl-D-erythritol 4-phosphate cytidylyltransferase.